The following is a 366-amino-acid chain: Galactoside alpha-(1,2)-fucosyltransferase 1 (366 aa).

Topologically, residues 1–8 (MWPPSHRQ) are cytoplasmic. A helical; Signal-anchor for type II membrane protein transmembrane segment spans residues 9–25 (LCRAFLLVCVFSVISFF). At 26–366 (LHIHQDSFPH…LSPLWTLAKP (341 aa)) the chain is on the lumenal side. N-linked (GlcNAc...) asparagine glycosylation is found at N66, N302, and N328.

Belongs to the glycosyltransferase 11 family.

Its subcellular location is the golgi apparatus. The protein localises to the golgi stack membrane. It catalyses the reaction a beta-D-galactosyl-(1-&gt;4)-N-acetyl-beta-D-glucosaminyl derivative + GDP-beta-L-fucose = an alpha-L-Fuc-(1-&gt;2)-beta-D-Gal-(1-&gt;4)-beta-D-GlcNAc derivative + GDP + H(+). It carries out the reaction a ganglioside GA1 + GDP-beta-L-fucose = a ganglioside Fuc-GA1 + GDP + H(+). The enzyme catalyses a beta-D-Gal-(1-&gt;3)-beta-D-GlcNAc-(1-&gt;3)-beta-D-Gal-(1-&gt;4)-beta-D-Glc-(1&lt;-&gt;1')-Cer(d18:1(4E)) + GDP-beta-L-fucose = alpha-L-fucosyl-(1-&gt;2)- beta-D-galactosyl-(1-&gt;3)-N-acetyl-beta-D-glucosaminyl-(1-&gt;3)-beta-D-galactosyl-(1-&gt;4)-beta-D-glucosyl-(1&lt;-&gt;1')-N-acylsphing-4-enine + GDP + H(+). The catalysed reaction is a neolactoside nLc4Cer(d18:1(4E)) + GDP-beta-L-fucose = a neolactoside IV(2)-alpha-Fuc-nLc4Cer(d18:1(4E)) + GDP + H(+). It catalyses the reaction a ganglioside GM1 + GDP-beta-L-fucose = a ganglioside Fuc-GM1 + GDP + H(+). It carries out the reaction beta-D-galactosyl-(1-&gt;3)-N-acetyl-D-galactosamine + GDP-beta-L-fucose = alpha-L-fucosyl-(1-&gt;2)-beta-D-galactosyl-(1-&gt;3)-N-acetyl-D-galactosamine + GDP + H(+). Its pathway is protein modification; protein glycosylation. Catalyzes the transfer of L-fucose, from a guanosine diphosphate-beta-L-fucose, to the terminal galactose residue of glycoconjugates through an alpha(1,2) linkage leading to H antigen synthesis that is an intermediate substrate in the synthesis of ABO blood group antigens. H antigen is essential for maturation of the glomerular layer of the main olfactory bulb, in cell migration and early cell-cell contacts during tumor associated angiogenesis. Preferentially fucosylates soluble lactose and to a lesser extent fucosylates glycolipids gangliosides GA1 and GM1a. The chain is Galactoside alpha-(1,2)-fucosyltransferase 1 from Gorilla gorilla gorilla (Western lowland gorilla).